The following is a 214-amino-acid chain: MNFLLSWVHWSLALLLYLHHAKWSQAAPMAGGEHKPHEVVKFMDVYQRSYCRPIETLVDIFQEYPDEIEYIFKPSCVPLMRCGGCCNDEGLECVPTEEFNITMQIMRIKPHQGQHIGEMSFLQHSKCECRPKKDRARQEKKSIRGKGKGQKRKRKKSRYKPWSVPCGPCSERRKHLFVQDPQTCKCSCKNTDSRCKARQLELNERTCRCDKPRR.

A signal peptide spans 1 to 26; the sequence is MNFLLSWVHWSLALLLYLHHAKWSQA. Cystine bridges form between C51/C93, C82/C127, and C86/C129. N100 is a glycosylation site (N-linked (GlcNAc...) asparagine). Residues 131 to 142 show a composition bias toward basic and acidic residues; the sequence is PKKDRARQEKKS. Positions 131–162 are disordered; sequence PKKDRARQEKKSIRGKGKGQKRKRKKSRYKPW. A compositionally biased stretch (basic residues) spans 143–159; sequence IRGKGKGQKRKRKKSRY.

The protein belongs to the PDGF/VEGF growth factor family. As to quaternary structure, homodimer; disulfide-linked. Also found as heterodimer with PGF. Interacts with NRP1. Interacts with BSG. Interacts with CD82; this interaction inhibits VEGFA-mediated signaling pathway.

It is found in the secreted. Its function is as follows. Growth factor active in angiogenesis, vasculogenesis and endothelial cell growth. Induces endothelial cell proliferation, promotes cell migration, inhibits apoptosis and induces permeabilization of blood vessels. Binds to the FLT1/VEGFR1 and KDR/VEGFR2 receptors, heparan sulfate and heparin. Binding to NRP1 receptor initiates a signaling pathway needed for motor neuron axon guidance and cell body migration, including for the caudal migration of facial motor neurons from rhombomere 4 to rhombomere 6 during embryonic development. Also binds the DEAR/FBXW7-AS1 receptor. This is Vascular endothelial growth factor A (VEGFA) from Canis lupus familiaris (Dog).